The sequence spans 1236 residues: ATP-dependent helicase/nuclease subunit A (1236 aa).

The region spanning 4 to 473 is the UvrD-like helicase ATP-binding domain; it reads VKWTKEQQQA…VNLFKNFRSR (470 aa). 25–32 is an ATP binding site; sequence AAAGSGKT. Positions 512–806 constitute a UvrD-like helicase C-terminal domain; sequence YEDKSLVGGP…RIMSIHKSKG (295 aa).

It belongs to the helicase family. AddA subfamily. Heterodimer of AddA and AddB/RexB. Requires Mg(2+) as cofactor.

It carries out the reaction Couples ATP hydrolysis with the unwinding of duplex DNA by translocating in the 3'-5' direction.. The catalysed reaction is ATP + H2O = ADP + phosphate + H(+). Functionally, the heterodimer acts as both an ATP-dependent DNA helicase and an ATP-dependent, dual-direction single-stranded exonuclease. Recognizes the chi site generating a DNA molecule suitable for the initiation of homologous recombination. The AddA nuclease domain is required for chi fragment generation; this subunit has the helicase and 3' -&gt; 5' nuclease activities. In Clostridium novyi (strain NT), this protein is ATP-dependent helicase/nuclease subunit A.